The sequence spans 202 residues: Ras-related protein RABD2b (202 aa).

Residues 15–23 (GDSGVGKSC), 33–40 (YLDSYIST), 63–67 (DTAGQ), 121–124 (NKND), and 151–153 (SAK) each bind GTP. Residues 37 to 45 (YISTIGVDF) carry the Effector region motif. Residues 174-202 (ASQPAGGAKPPTVQIRGQPVNQQSGCCSS) form a disordered region. Residues 192-202 (PVNQQSGCCSS) are compositionally biased toward polar residues. S-geranylgeranyl cysteine attachment occurs at residues Cys199 and Cys200.

This sequence belongs to the small GTPase superfamily. Rab family.

It is found in the golgi apparatus. It localises to the trans-Golgi network membrane. Its subcellular location is the golgi apparatus membrane. Functionally, protein transport. Regulator of membrane traffic from the Golgi apparatus towards the endoplasmic reticulum (ER). The polypeptide is Ras-related protein RABD2b (RABD2B) (Arabidopsis thaliana (Mouse-ear cress)).